The sequence spans 478 residues: MKNVLLIASEAVPFIKTGGLADVAGSLPKYFDKTKFDVRVMIPKYTCIPWEYREKMVYKTHFYIDLAWRTQYVGVFELEWNGVTFYFIDNEFYFGGNKPYSWIHEDIEKFAFFSKAALSALPVLGFRPDIIHCNDWQTGLIPVYLKERFSQGEFYQGIKSIMTIHNLKFQGIWDLKKVKDITGLPDEYFTSDKLEAYDDANYLKGGIVYADRVTTVSETYAEEIKTPFYGENLDGLMRARSNVLSGIVNGIDYDEYNPETDKRIPNNYNQVTFRKEKWKNKVALQKELGLTEDKGKFMIGLVSRLTDQKGLDLVAYVMDQLCAEDVQFVVLGTGEERYENMFRHYDWKYNDRVSANIYYSEDMSHKIYAACDAFLMPSLFEPCGLSQLMSLRYGTVPIVRETGGLKDTVEPYNEYEGKGTGFSFANYNAHEMLGIVNYAKDVYYNHKREWNKIVDRGMKTDFSWNSSARKYEELYNSL.

K16 lines the ADP-alpha-D-glucose pocket.

The protein belongs to the glycosyltransferase 1 family. Bacterial/plant glycogen synthase subfamily.

It carries out the reaction [(1-&gt;4)-alpha-D-glucosyl](n) + ADP-alpha-D-glucose = [(1-&gt;4)-alpha-D-glucosyl](n+1) + ADP + H(+). The protein operates within glycan biosynthesis; glycogen biosynthesis. Its function is as follows. Synthesizes alpha-1,4-glucan chains using ADP-glucose. This Lachnospira eligens (strain ATCC 27750 / DSM 3376 / VPI C15-48 / C15-B4) (Eubacterium eligens) protein is Glycogen synthase.